We begin with the raw amino-acid sequence, 125 residues long: Egg cell-secreted protein 1.2 (125 aa).

An N-terminal signal peptide occupies residues 1–22; it reads MASNTSFLFATIAILLVLNISG.

Belongs to the plant egg cell-secreted peptide family. Restricted to female reproductive tissues, specifically accumulating in storage vesicles of the unfertilized egg cell.

It localises to the cytoplasmic vesicle. The protein localises to the secreted. Functionally, involved in the regulation of gamete interactions during the double fertilization and to prevent multiple-pollen tube attraction; mediates the redistribution of the gamete fusogen HAP2/GCS1 to the cell surface after secretion upon sperm arrival. This is Egg cell-secreted protein 1.2 (EC1.2) from Arabidopsis thaliana (Mouse-ear cress).